The following is a 649-amino-acid chain: Forkhead box protein O1 (649 aa).

2 disordered regions span residues 1-62 (MAEA…ASAS) and 112-151 (VHSA…SSRR). Thr-24 carries the post-translational modification Phosphothreonine; by PKB/AKT1 or PKB/AKT2 and SGK1. Residues 33-62 (NQSNSTTSSPAPSGSTAANPDATASLASAS) show a composition bias toward low complexity. Residues 116 to 135 (PPQPPPTGPLSQPPPVPPAA) show a composition bias toward pro residues. Positions 154–248 (WGNLSYADLI…KSGKSPRRRA (95 aa)) form a DNA-binding region, fork-head. 2 DNA-binding regions span residues 205 to 212 (NSIRHNLS) and 228 to 231 (SSWW). Ser-206 bears the Phosphoserine; by STK4/MST1 mark. 3 positions are modified to phosphoserine: Ser-212, Ser-228, and Ser-229. The interval 228 to 339 (SSWWMLNPEG…DDLGDGDVHS (112 aa)) is disordered. An N6-acetyllysine mark is found at Lys-239 and Lys-242. Ser-243 is modified (phosphoserine; by CDK1). Arg-245 and Arg-247 each carry omega-N-methylarginine; by PRMT1. The short motif at 245 to 247 (RRR) is the Nuclear localization signal element. Ser-250 is modified (phosphoserine; by PKB/AKT1 and SGK1). An N6-acetyllysine mark is found at Lys-256, Lys-259, and Lys-268. Positions 258–269 (AKSRGRAAKKKA) are enriched in basic residues. The sufficient for interaction with NLK stretch occupies residues 277–557 (GPGDSPGSQF…RLTPVKTPLQ (281 aa)). Phosphoserine occurs at positions 281 and 292. Positions 303 to 320 (NWSTFRPRTSSNASTISG) are enriched in polar residues. Ser-313 is subject to Phosphoserine; by PKB/AKT1. At Ser-316 the chain carries Phosphoserine; by CK1 and SGK1. The residue at position 319 (Ser-319) is a Phosphoserine; by CK1. Ser-323 carries the phosphoserine modification. The residue at position 327 (Thr-327) is a Phosphothreonine. The interval 357–453 (SEISNPENME…GGLNQYNCAP (97 aa)) is required for interaction with RUNX2. The residue at position 417 (Lys-417) is an N6-acetyllysine. The short motif at 456–460 (LKELL) is the Required for interaction with SIRT1 element.

Interacts with LRPPRC. Interacts with RUNX2; the interaction inhibits RUNX2 transcriptional activity and mediates the IGF1/insulin-dependent BGLAP expression in osteoblasts Interacts with PPP2R1A; the interaction regulates the dephosphorylation of FOXO1 at Thr-24 and Ser-250 leading to its nuclear import. Interacts with NLK. Interacts with SIRT1; the interaction results in the deacetylation of FOXO1 leading to activation of FOXO1-mediated transcription of genes involved in DNA repair and stress resistance. Binds to CDK1. Interacts with the 14-3-3 proteins, YWHAG and YWHAZ; the interactions require insulin-stimulated phosphorylation on Thr-24, promote nuclear exit and loss of transcriptional activity. Interacts with SKP2; the interaction ubiquitinates FOXO1 leading to its proteasomal degradation. The interaction requires the presence of KRIT1. Interacts (via the C-terminal half) with ATF4 (via its DNA binding domain); the interaction occurs in osteoblasts, regulates glucose homeostasis via suppression of beta-cell proliferation and subsequent decrease in insulin production. Interacts with PRMT1; the interaction methylates FOXO1, prevents PKB/AKT1 phosphorylation and retains FOXO1 in the nucleus. Interacts with EP300 and CREBBP; the interactions acetylate FOXO1. Interacts with SIRT2; the interaction is disrupted in response to oxidative stress or serum deprivation, leading to increased level of acetylated FOXO1, which promotes stress-induced autophagy by stimulating E1-like activating enzyme ATG7. Interacts (acetylated form) with ATG7; the interaction is increased in response to oxidative stress or serum deprivation and promotes the autophagic process leading to cell death. Interacts (acetylated form) with PPARG. Interacts with XBP1; this interaction is direct and leads to FOXO1 ubiquitination and degradation via the proteasome pathway. Interacts (via the Fork-head domain) with CEBPA; the interaction increases when FOXO1 is deacetylated. Interacts with WDFY2. Forms a complex with WDFY2 and AKT1. Interacts with CRY1. Interacts with PPIA/CYPA; the interaction promotes FOXO1 dephosphorylation, nuclear accumulation and transcriptional activity. Interacts with TOX4; FOXO1 is required for full induction of TOX4-dependent activity and the interaction is inhibited by insulin. Interacts (when phosphorylated on Ser-250) with STUB1/CHIP. Post-translationally, phosphorylation by NLK promotes nuclear export and inhibits the transcriptional activity. In response to growth factors, phosphorylation on Thr-24, Ser-250 and Ser-313 by PKB/AKT1 promotes nuclear export and inactivation of transactivational activity. Phosphorylation on Thr-24 is required for binding 14-3-3 proteins. Phosphorylation of Ser-250 decreases DNA-binding activity and promotes the phosphorylation of Thr-24 and Ser-313, permitting phosphorylation of Ser-316 and Ser-319, probably by CDK1, leading to nuclear exclusion and loss of function. Stress signals, such as response to oxygen or nitric oxide, attenuate the PKB/AKT1-mediated phosphorylation leading to nuclear retention. Phosphorylation of Ser-323 is independent of IGF1 and leads to reduced function. Dephosphorylated on Thr-24 and Ser-250 by PP2A in beta-cells under oxidative stress leading to nuclear retention. Phosphorylation of Ser-243 by CDK1 disrupts binding of 14-3-3 proteins leading to nuclear accumulation and has no effect on DNA binding nor transcriptional activity. Phosphorylation by STK4/MST1 on Ser-206, upon oxidative stress, inhibits binding to 14-3-3 proteins and nuclear export. PPIA/CYPA promotes its dephosphorylation on Ser-250. Ubiquitinated by SKP2. Ubiquitination leads to proteasomal degradation. Ubiquitinated by STUB1/CHIP; when Ser-250 is phosphorylated. In terms of processing, methylation inhibits AKT1-mediated phosphorylation at Ser-250 and is increased by oxidative stress. Post-translationally, acetylated. Acetylation at Lys-256 and Lys-268 are necessary for autophagic cell death induction. Deacetylated by SIRT2 in response to oxidative stress or serum deprivation, thereby negatively regulating FOXO1-mediated autophagic cell death. Once in the nucleus, acetylated by CREBBP/EP300. Acetylation diminishes the interaction with target DNA and attenuates the transcriptional activity. It increases the phosphorylation at Ser-250. Deacetylation by SIRT1 results in reactivation of the transcriptional activity. Oxidative stress by hydrogen peroxide treatment appears to promote deacetylation and uncoupling of insulin-induced phosphorylation. By contrast, resveratrol acts independently of acetylation. Acetylated at Lys-417, promoting its localization to the nucleus and transcription factor activity. Deacetylation at Lys-417 by SIRT6, promotes its translocation into the cytoplasm, preventing its transcription factor activity. Deacetylation and subsequent inhibition by SIRT6 has different effects depending on cell types: it inhibits gluconeogenesis in hepatocytes, promotes glucose sensing in pancreatic beta-cells and regulates lipid catabolism in brown adipocytes. Expressed in the internal elastic lamina of the carotid artery (at protein level).

Its subcellular location is the cytoplasm. It is found in the nucleus. In terms of biological role, transcription factor that is the main target of insulin signaling and regulates metabolic homeostasis in response to oxidative stress. Binds to the insulin response element (IRE) with consensus sequence 5'-TT[G/A]TTTTG-3' and the related Daf-16 family binding element (DBE) with consensus sequence 5'-TT[G/A]TTTAC-3'. Activity suppressed by insulin. Main regulator of redox balance and osteoblast numbers and controls bone mass. Orchestrates the endocrine function of the skeleton in regulating glucose metabolism. Also acts as a key regulator of chondrogenic commitment of skeletal progenitor cells in response to lipid availability: when lipids levels are low, translocates to the nucleus and promotes expression of SOX9, which induces chondrogenic commitment and suppresses fatty acid oxidation. Acts synergistically with ATF4 to suppress osteocalcin/BGLAP activity, increasing glucose levels and triggering glucose intolerance and insulin insensitivity. Also suppresses the transcriptional activity of RUNX2, an upstream activator of osteocalcin/BGLAP. Acts as an inhibitor of glucose sensing in pancreatic beta cells by acting as a transcription repressor and suppressing expression of PDX1. In hepatocytes, promotes gluconeogenesis by acting together with PPARGC1A and CEBPA to activate the expression of genes such as IGFBP1, G6PC1 and PCK1. Also promotes gluconeogenesis by directly promoting expression of PPARGC1A and G6PC1. Important regulator of cell death acting downstream of CDK1, PKB/AKT1 and STK4/MST1. Promotes neural cell death. Mediates insulin action on adipose tissue. Regulates the expression of adipogenic genes such as PPARG during preadipocyte differentiation and, adipocyte size and adipose tissue-specific gene expression in response to excessive calorie intake. Regulates the transcriptional activity of GADD45A and repair of nitric oxide-damaged DNA in beta-cells. Required for the autophagic cell death induction in response to starvation or oxidative stress in a transcription-independent manner. Mediates the function of MLIP in cardiomyocytes hypertrophy and cardiac remodeling. Positive regulator of apoptosis in cardiac smooth muscle cells as a result of its transcriptional activation of pro-apoptotic genes. Regulates endothelial cell (EC) viability and apoptosis in a PPIA/CYPA-dependent manner via transcription of CCL2 and BCL2L11 which are involved in EC chemotaxis and apoptosis. This Rattus norvegicus (Rat) protein is Forkhead box protein O1 (Foxo1).